Consider the following 129-residue polypeptide: Follitropin subunit beta (129 aa).

Positions Met1–Ser20 are cleaved as a signal peptide. 6 disulfides stabilise this stretch: Cys21-Cys69, Cys35-Cys84, Cys38-Cys122, Cys46-Cys100, Cys50-Cys102, and Cys105-Cys112. 2 N-linked (GlcNAc...) asparagine glycosylation sites follow: Asn25 and Asn42.

Belongs to the glycoprotein hormones subunit beta family. Heterodimer. The active follitropin is a heterodimer composed of an alpha chain/CGA shared with other hormones and a unique beta chain/FSHB shown here.

The protein resides in the secreted. Its function is as follows. Together with the alpha chain CGA constitutes follitropin, the follicle-stimulating hormone, and provides its biological specificity to the hormone heterodimer. Binds FSHR, a G protein-coupled receptor, on target cells to activate downstream signaling pathways. Follitropin is involved in follicle development and spermatogenesis in reproductive organs. This is Follitropin subunit beta (FSHB) from Bos taurus (Bovine).